The following is a 190-amino-acid chain: Membrane protein FAM174A (190 aa).

The first 29 residues, 1 to 29 (MPTRRGCSGPCHFLASAFVLLLLPALNQS), serve as a signal peptide directing secretion. Residues N27 and N83 are each glycosylated (N-linked (GlcNAc...) asparagine). The Extracellular portion of the chain corresponds to 30 to 123 (VVLPSTVPRA…NPSDKPMTQR (94 aa)). The tract at residues 37–119 (PRAVQESKPL…AVSPNPSDKP (83 aa)) is disordered. A helical membrane pass occupies residues 124–144 (ALTVLVVVSAAVLVYFVVRTV). Residues 145-190 (RMRRRNRKTRRYGVLDTNIENMELTPLEQDDEDDDNTLFDANHPRR) are Cytoplasmic-facing. Positions 168 to 190 (LTPLEQDDEDDDNTLFDANHPRR) are disordered. Over residues 172 to 181 (EQDDEDDDNT) the composition is skewed to acidic residues.

This sequence belongs to the FAM174 family.

It localises to the membrane. The sequence is that of Membrane protein FAM174A (Fam174a) from Rattus norvegicus (Rat).